A 174-amino-acid chain; its full sequence is RNA pyrophosphohydrolase (174 aa).

The 144-residue stretch at 6–149 (GYRPNVGIIL…KRDVYLGALK (144 aa)) folds into the Nudix hydrolase domain. The Nudix box motif lies at 38 to 59 (GGIKPGESPETAMYRELYEEVG).

The protein belongs to the Nudix hydrolase family. RppH subfamily. It depends on a divalent metal cation as a cofactor.

Accelerates the degradation of transcripts by removing pyrophosphate from the 5'-end of triphosphorylated RNA, leading to a more labile monophosphorylated state that can stimulate subsequent ribonuclease cleavage. This Neisseria meningitidis serogroup C (strain 053442) protein is RNA pyrophosphohydrolase.